The chain runs to 314 residues: tRNA dimethylallyltransferase (314 aa).

G36–T43 contacts ATP. T38–T43 lines the substrate pocket. Positions D61–Q64 are interaction with substrate tRNA.

Belongs to the IPP transferase family. In terms of assembly, monomer. The cofactor is Mg(2+).

The enzyme catalyses adenosine(37) in tRNA + dimethylallyl diphosphate = N(6)-dimethylallyladenosine(37) in tRNA + diphosphate. Catalyzes the transfer of a dimethylallyl group onto the adenine at position 37 in tRNAs that read codons beginning with uridine, leading to the formation of N6-(dimethylallyl)adenosine (i(6)A). This is tRNA dimethylallyltransferase from Sorangium cellulosum (strain So ce56) (Polyangium cellulosum (strain So ce56)).